The sequence spans 122 residues: uncharacterized protein (122 aa).

Residues 1 to 10 are compositionally biased toward polar residues; it reads MGTGLRSQSL. The tract at residues 1–68 is disordered; the sequence is MGTGLRSQSL…GQEWLPGSLG (68 aa). Residues 40–56 are compositionally biased toward basic and acidic residues; that stretch reads QGREKSRSSDGGPERLD.

This is an uncharacterized protein from Bos taurus (Bovine).